Reading from the N-terminus, the 122-residue chain is MIQVQTILKAADNTGARKLMCIRVMGGSLRRYASVGDIIVASVKEATPGGVVKKGDVVKCVVVRTSKEVRRPDGSYIKFDENAAVVIKDDKTPRGTRIFGPVARELREKDFMKIVSLAPEVI.

The protein belongs to the universal ribosomal protein uL14 family. In terms of assembly, part of the 50S ribosomal subunit. Forms a cluster with proteins L3 and L19. In the 70S ribosome, L14 and L19 interact and together make contacts with the 16S rRNA in bridges B5 and B8.

Functionally, binds to 23S rRNA. Forms part of two intersubunit bridges in the 70S ribosome. This chain is Large ribosomal subunit protein uL14, found in Desulforamulus reducens (strain ATCC BAA-1160 / DSM 100696 / MI-1) (Desulfotomaculum reducens).